A 321-amino-acid chain; its full sequence is Hydrolase 3 (321 aa).

Positions 80-82 (HGA) match the Involved in the stabilization of the negatively charged intermediate by the formation of the oxyanion hole motif. Residues Ser172 and Asp267 contribute to the active site.

This sequence belongs to the 'GDXG' lipolytic enzyme family.

It carries out the reaction dihydroprecondylocarpine acetate + NADPH = (+)-vincadifformine + acetate + NADP(+). The protein operates within alkaloid biosynthesis. Component of the seco-iridoid and derivatives monoterpenoid indole alkaloids (MIAs, e.g. vincadifformine) biosynthesis pathway. Catalyzes the conversion of O-acetylstemmadenine (OAS) to vincadifformine. May also trigger the formation of additional unknown MIAs. The sequence is that of Hydrolase 3 from Catharanthus roseus (Madagascar periwinkle).